We begin with the raw amino-acid sequence, 448 residues long: Porin AaxA (448 aa).

A signal peptide spans 1–24; sequence MASFRSSLLSALCAYGMMVMPAYA.

The protein belongs to the OprB family.

It localises to the cell outer membrane. In terms of biological role, facilitates L-arginine uptake, as part of the AaxABC system. The arginine uptake by the bacterium in the macrophage may be a virulence factor against the host innate immune response. This chain is Porin AaxA (aaxA), found in Chlamydia abortus (strain DSM 27085 / S26/3) (Chlamydophila abortus).